Consider the following 435-residue polypeptide: Ornithine decarboxylase (435 aa).

K98 is modified (N6-(pyridoxal phosphate)lysine). Residues S230, G268, and 301-304 (EPGR) contribute to the pyridoxal 5'-phosphate site. 344-345 (YD) serves as a coordination point for substrate. C380 (proton donor; shared with dimeric partner) is an active-site residue. D381 is a substrate binding site. Residue Y409 participates in pyridoxal 5'-phosphate binding.

This sequence belongs to the Orn/Lys/Arg decarboxylase class-II family. As to quaternary structure, homodimer. Only the dimer is catalytically active, as the active sites are constructed of residues from both monomers. Pyridoxal 5'-phosphate is required as a cofactor.

The catalysed reaction is L-ornithine + H(+) = putrescine + CO2. The protein operates within amine and polyamine biosynthesis; putrescine biosynthesis via L-ornithine pathway; putrescine from L-ornithine: step 1/1. Its activity is regulated as follows. Inhibited by antizyme (AZ) in response to polyamine levels. AZ inhibits the assembly of the functional homodimer by binding to ODC monomers and targeting them for ubiquitin-independent proteolytic destruction by the 26S proteasome. In terms of biological role, catalyzes the first and rate-limiting step of polyamine biosynthesis that converts ornithine into putrescine, which is the precursor for the polyamines, spermidine and spermine. Polyamines are essential for cell proliferation and are implicated in cellular processes, ranging from DNA replication to apoptosis. The chain is Ornithine decarboxylase (ODC) from Capsicum annuum (Capsicum pepper).